The primary structure comprises 1488 residues: Chromosome partition protein MukB (1488 aa).

Residue 34-41 (GGNGAGKS) coordinates ATP. 3 coiled-coil regions span residues 326-418 (LEAD…QYNQ), 444-472 (LDTFQAKEQEATEKLLSLEQKMSVAQTAH), and 509-602 (RHLA…QRAP). The tract at residues 666-783 (PGGAEDQRLN…SLPIFGRAAR (118 aa)) is flexible hinge. Coiled coils occupy residues 835–923 (EAEI…AKLE), 977–1116 (EMLS…AKAG), and 1209–1265 (VEAI…LQSV). Positions 1049-1074 (ADSGAEERARQRRDELHAQLSNNRSR) are disordered. Residues 1051-1065 (SGAEERARQRRDELH) show a composition bias toward basic and acidic residues.

This sequence belongs to the SMC family. MukB subfamily. In terms of assembly, homodimerization via its hinge domain. Binds to DNA via its C-terminal region. Interacts, and probably forms a ternary complex, with MukE and MukF via its C-terminal region. The complex formation is stimulated by calcium or magnesium. Interacts with tubulin-related protein FtsZ.

The protein resides in the cytoplasm. The protein localises to the nucleoid. Functionally, plays a central role in chromosome condensation, segregation and cell cycle progression. Functions as a homodimer, which is essential for chromosome partition. Involved in negative DNA supercoiling in vivo, and by this means organize and compact chromosomes. May achieve or facilitate chromosome segregation by condensation DNA from both sides of a centrally located replisome during cell division. In Salmonella typhi, this protein is Chromosome partition protein MukB.